Consider the following 358-residue polypeptide: Peroxidase 54 (358 aa).

An N-terminal signal peptide occupies residues 1 to 31 (MAVTSSSSTCDGFFIISLIVIVSSLFGTSSA). Glutamine 32 is modified (pyrrolidone carboxylic acid). Asparagine 34 and asparagine 44 each carry an N-linked (GlcNAc...) asparagine glycan. Cystine bridges form between cysteine 42–cysteine 122, cysteine 75–cysteine 80, cysteine 128–cysteine 330, and cysteine 207–cysteine 239. Residue histidine 73 is the Proton acceptor of the active site. Residues aspartate 74, valine 77, glycine 79, aspartate 81, and serine 83 each contribute to the Ca(2+) site. Asparagine 103, asparagine 161, and asparagine 166 each carry an N-linked (GlcNAc...) asparagine glycan. Residue proline 170 coordinates substrate. N-linked (GlcNAc...) asparagine glycosylation occurs at asparagine 178. Position 200 (histidine 200) interacts with heme b. Threonine 201 provides a ligand contact to Ca(2+). Residues asparagine 218, asparagine 228, and asparagine 242 are each glycosylated (N-linked (GlcNAc...) asparagine). The Ca(2+) site is built by aspartate 252, threonine 255, and aspartate 260. Asparagine 298 carries N-linked (GlcNAc...) asparagine glycosylation.

The protein belongs to the peroxidase family. Classical plant (class III) peroxidase subfamily. The cofactor is heme b. Requires Ca(2+) as cofactor.

Its subcellular location is the secreted. It is found in the vacuole. The enzyme catalyses 2 a phenolic donor + H2O2 = 2 a phenolic radical donor + 2 H2O. Its function is as follows. Removal of H(2)O(2), oxidation of toxic reductants, biosynthesis and degradation of lignin, suberization, auxin catabolism, response to environmental stresses such as wounding, pathogen attack and oxidative stress. These functions might be dependent on each isozyme/isoform in each plant tissue. The protein is Peroxidase 54 (PER54) of Arabidopsis thaliana (Mouse-ear cress).